A 242-amino-acid polypeptide reads, in one-letter code: Small ribosomal subunit protein uS2 (242 aa).

Belongs to the universal ribosomal protein uS2 family.

The sequence is that of Small ribosomal subunit protein uS2 from Shewanella amazonensis (strain ATCC BAA-1098 / SB2B).